The primary structure comprises 175 residues: ATP synthase subunit b, chloroplastic (175 aa).

Residues 26–44 (VINLAVVIGVVVSFVGDAV) form a helical membrane-spanning segment.

This sequence belongs to the ATPase B chain family. As to quaternary structure, F-type ATPases have 2 components, F(1) - the catalytic core - and F(0) - the membrane proton channel. F(1) has five subunits: alpha(3), beta(3), gamma(1), delta(1), epsilon(1). F(0) has four main subunits: a(1), b(1), b'(1) and c(10-14). The alpha and beta chains form an alternating ring which encloses part of the gamma chain. F(1) is attached to F(0) by a central stalk formed by the gamma and epsilon chains, while a peripheral stalk is formed by the delta, b and b' chains.

It localises to the plastid. It is found in the chloroplast thylakoid membrane. F(1)F(0) ATP synthase produces ATP from ADP in the presence of a proton or sodium gradient. F-type ATPases consist of two structural domains, F(1) containing the extramembraneous catalytic core and F(0) containing the membrane proton channel, linked together by a central stalk and a peripheral stalk. During catalysis, ATP synthesis in the catalytic domain of F(1) is coupled via a rotary mechanism of the central stalk subunits to proton translocation. Functionally, component of the F(0) channel, it forms part of the peripheral stalk, linking F(1) to F(0). The chain is ATP synthase subunit b, chloroplastic from Tupiella akineta (Green alga).